The sequence spans 662 residues: Sporulation protein RMD8 (662 aa).

Disordered regions lie at residues 1–136 (MSYK…RTSK), 286–320 (YELE…SFNP), and 346–406 (LKKE…QNDF). Residue Ser-2 is modified to N-acetylserine. Over residues 99–121 (SARREERLSSSSSDRPRQYERLS) the composition is skewed to basic and acidic residues. Residues 286–304 (YELETSGNNNNANQDTTTV) are compositionally biased toward polar residues. Positions 383 to 395 (SSRSPASPSSIST) are enriched in low complexity. The chain crosses the membrane as a helical span at residues 630 to 647 (VTWWFILVILFGVIFSLT).

This sequence belongs to the RMD1/sif2 family.

The protein resides in the membrane. In terms of biological role, required for sporulation. The protein is Sporulation protein RMD8 (RMD8) of Saccharomyces cerevisiae (strain ATCC 204508 / S288c) (Baker's yeast).